A 248-amino-acid polypeptide reads, in one-letter code: MTEATRILLGVNIDHVATLRQARGTRYPDPVKAALDAEEAGADGITVHLREDRRHIQERDVRVLKEVLQTRMNFEMGVTEEMLAFAEEIRPAHSCLVPERREELTTEGGLDVAGQEQRIRDAVRRLAAVGSEVSLFIDPDPRQIEASARVGAPAIELHTGRYADAEDPEEQTRELQRVREGVALGRSLGLIVNAGHGLHYHNVEPVAAIDGINELNIGHAIVAHALFVGFRQAVAEMKALMLAAATKR.

Asparagine 12 is a binding site for 3-amino-2-oxopropyl phosphate. Residue 14 to 15 participates in 1-deoxy-D-xylulose 5-phosphate binding; that stretch reads DH. Position 23 (arginine 23) interacts with 3-amino-2-oxopropyl phosphate. The active-site Proton acceptor is histidine 48. Residues arginine 50 and histidine 55 each contribute to the 1-deoxy-D-xylulose 5-phosphate site. The Proton acceptor role is filled by glutamate 75. Residue threonine 105 coordinates 1-deoxy-D-xylulose 5-phosphate. Residue histidine 196 is the Proton donor of the active site. 3-amino-2-oxopropyl phosphate contacts are provided by residues glycine 197 and 218–219; that span reads GH.

This sequence belongs to the PNP synthase family. Homooctamer; tetramer of dimers.

The protein localises to the cytoplasm. It catalyses the reaction 3-amino-2-oxopropyl phosphate + 1-deoxy-D-xylulose 5-phosphate = pyridoxine 5'-phosphate + phosphate + 2 H2O + H(+). It functions in the pathway cofactor biosynthesis; pyridoxine 5'-phosphate biosynthesis; pyridoxine 5'-phosphate from D-erythrose 4-phosphate: step 5/5. Functionally, catalyzes the complicated ring closure reaction between the two acyclic compounds 1-deoxy-D-xylulose-5-phosphate (DXP) and 3-amino-2-oxopropyl phosphate (1-amino-acetone-3-phosphate or AAP) to form pyridoxine 5'-phosphate (PNP) and inorganic phosphate. The protein is Pyridoxine 5'-phosphate synthase of Pseudomonas aeruginosa (strain LESB58).